The following is a 256-amino-acid chain: Sugar fermentation stimulation protein homolog (256 aa).

Residues 128–141 (TGSTDTSFSGTPPT) show a composition bias toward low complexity. The disordered stretch occupies residues 128–149 (TGSTDTSFSGTPPTNTEPANTK).

Belongs to the SfsA family.

The sequence is that of Sugar fermentation stimulation protein homolog from Shewanella sediminis (strain HAW-EB3).